The following is an 87-amino-acid chain: Large ribosomal subunit protein eL20 (87 aa).

It belongs to the eukaryotic ribosomal protein eL20 family. As to quaternary structure, part of the 50S ribosomal subunit. Binds 23S rRNA.

The chain is Large ribosomal subunit protein eL20 from Hyperthermus butylicus (strain DSM 5456 / JCM 9403 / PLM1-5).